The following is a 120-amino-acid chain: 2-amino-4-hydroxy-6-hydroxymethyldihydropteridine pyrophosphokinase (120 aa).

This sequence belongs to the HPPK family.

The enzyme catalyses 6-hydroxymethyl-7,8-dihydropterin + ATP = (7,8-dihydropterin-6-yl)methyl diphosphate + AMP + H(+). It participates in cofactor biosynthesis; tetrahydrofolate biosynthesis; 2-amino-4-hydroxy-6-hydroxymethyl-7,8-dihydropteridine diphosphate from 7,8-dihydroneopterin triphosphate: step 4/4. In terms of biological role, catalyzes the transfer of pyrophosphate from adenosine triphosphate (ATP) to 6-hydroxymethyl-7,8-dihydropterin, an enzymatic step in folate biosynthesis pathway. This Pseudomonas putida (Arthrobacter siderocapsulatus) protein is 2-amino-4-hydroxy-6-hydroxymethyldihydropteridine pyrophosphokinase (folK).